A 357-amino-acid chain; its full sequence is Membrane-bound lytic murein transglycosylase C (357 aa).

The N-terminal stretch at 1–16 (MKKMLALLVIAPLLVS) is a signal peptide. Cys-17 is lipidated: N-palmitoyl cysteine. The S-diacylglycerol cysteine moiety is linked to residue Cys-17.

It belongs to the transglycosylase Slt family.

It localises to the cell outer membrane. It carries out the reaction Exolytic cleavage of the (1-&gt;4)-beta-glycosidic linkage between N-acetylmuramic acid (MurNAc) and N-acetylglucosamine (GlcNAc) residues in peptidoglycan, from either the reducing or the non-reducing ends of the peptidoglycan chains, with concomitant formation of a 1,6-anhydrobond in the MurNAc residue.. Its function is as follows. Murein-degrading enzyme. May play a role in recycling of muropeptides during cell elongation and/or cell division. This Pectobacterium atrosepticum (strain SCRI 1043 / ATCC BAA-672) (Erwinia carotovora subsp. atroseptica) protein is Membrane-bound lytic murein transglycosylase C.